The sequence spans 625 residues: UvrABC system protein C (625 aa).

A GIY-YIG domain is found at 26-105 (LEPGVYFLRD…IKQHQPHFNT (80 aa)). The UVR domain maps to 215-250 (GELLEKLATKMLAASENLDFEQAATIRDQIRGLQAL).

This sequence belongs to the UvrC family. In terms of assembly, interacts with UvrB in an incision complex.

The protein resides in the cytoplasm. Its function is as follows. The UvrABC repair system catalyzes the recognition and processing of DNA lesions. UvrC both incises the 5' and 3' sides of the lesion. The N-terminal half is responsible for the 3' incision and the C-terminal half is responsible for the 5' incision. The chain is UvrABC system protein C from Microcystis aeruginosa (strain NIES-843 / IAM M-2473).